A 648-amino-acid chain; its full sequence is Activatory protein CHA4 (648 aa).

Over residues 1–10 (MMLEPSPPPL) the composition is skewed to pro residues. The segment at 1–37 (MMLEPSPPPLTTTVTPSLPSSLKKSVTDNDQNNNNVP) is disordered. Low complexity predominate over residues 11 to 22 (TTTVTPSLPSSL). The zn(2)-C6 fungal-type DNA-binding region spans 44-70 (CQNCRRRRRKCNMEKPCSNCIKFRTEC). Positions 140 to 177 (AQSALPSSESNDENESDAFTKKMPSESPPPVGTNSIYP) are disordered. Ser-164 and Ser-166 each carry phosphoserine.

It localises to the nucleus. Activates the CHA1 gene for L-serine dehydratase. Binds to the DNA sequence 5'-GVGGARAYRTRATTCCRC-3'. The chain is Activatory protein CHA4 (CHA4) from Saccharomyces cerevisiae (strain ATCC 204508 / S288c) (Baker's yeast).